The chain runs to 141 residues: VLSDKDKTNVKATWSKVGDHASDYVAEALERMFFSFPTTKTYFPHFDLSHGSGQVKGHGKKVGEALTQAVGHLDDLPSALSALSDLHAHKLRVDPVNFKLLSHCLLVTLSSHQPTEFTPEVHASLDKFLSNVSTVLTSKYR.

Positions 1 to 141 constitute a Globin domain; the sequence is VLSDKDKTNV…VSTVLTSKYR (141 aa). Serine 3 is subject to Phosphoserine. Lysine 7 is modified (N6-succinyllysine). Threonine 8 is subject to Phosphothreonine. Lysine 11 carries the N6-succinyllysine modification. Lysine 16 carries the N6-acetyllysine; alternate modification. Lysine 16 bears the N6-succinyllysine; alternate mark. The residue at position 24 (tyrosine 24) is a Phosphotyrosine. Serine 35 bears the Phosphoserine mark. An N6-succinyllysine modification is found at lysine 40. Position 49 is a phosphoserine (serine 49). O2 is bound at residue histidine 58. Histidine 87 contacts heme b. Serine 102 carries the phosphoserine modification. Threonine 108 is modified (phosphothreonine). The residue at position 124 (serine 124) is a Phosphoserine. 2 positions are modified to phosphothreonine: threonine 134 and threonine 137. A Phosphoserine modification is found at serine 138.

This sequence belongs to the globin family. In terms of assembly, heterotetramer of two alpha chains and two beta chains. In terms of tissue distribution, red blood cells.

Functionally, involved in oxygen transport from the lung to the various peripheral tissues. In terms of biological role, hemopressin acts as an antagonist peptide of the cannabinoid receptor CNR1. Hemopressin-binding efficiently blocks cannabinoid receptor CNR1 and subsequent signaling. The polypeptide is Hemoglobin subunit alpha (HBA) (Elephas maximus (Indian elephant)).